Here is a 94-residue protein sequence, read N- to C-terminus: Aspartyl/glutamyl-tRNA(Asn/Gln) amidotransferase subunit C (94 aa).

The protein belongs to the GatC family. As to quaternary structure, heterotrimer of A, B and C subunits.

The enzyme catalyses L-glutamyl-tRNA(Gln) + L-glutamine + ATP + H2O = L-glutaminyl-tRNA(Gln) + L-glutamate + ADP + phosphate + H(+). It carries out the reaction L-aspartyl-tRNA(Asn) + L-glutamine + ATP + H2O = L-asparaginyl-tRNA(Asn) + L-glutamate + ADP + phosphate + 2 H(+). In terms of biological role, allows the formation of correctly charged Asn-tRNA(Asn) or Gln-tRNA(Gln) through the transamidation of misacylated Asp-tRNA(Asn) or Glu-tRNA(Gln) in organisms which lack either or both of asparaginyl-tRNA or glutaminyl-tRNA synthetases. The reaction takes place in the presence of glutamine and ATP through an activated phospho-Asp-tRNA(Asn) or phospho-Glu-tRNA(Gln). In Campylobacter jejuni subsp. jejuni serotype O:6 (strain 81116 / NCTC 11828), this protein is Aspartyl/glutamyl-tRNA(Asn/Gln) amidotransferase subunit C.